The following is a 351-amino-acid chain: Phosphoribosylformylglycinamidine cyclo-ligase (351 aa).

Belongs to the AIR synthase family.

It localises to the cytoplasm. It carries out the reaction 2-formamido-N(1)-(5-O-phospho-beta-D-ribosyl)acetamidine + ATP = 5-amino-1-(5-phospho-beta-D-ribosyl)imidazole + ADP + phosphate + H(+). It participates in purine metabolism; IMP biosynthesis via de novo pathway; 5-amino-1-(5-phospho-D-ribosyl)imidazole from N(2)-formyl-N(1)-(5-phospho-D-ribosyl)glycinamide: step 2/2. This is Phosphoribosylformylglycinamidine cyclo-ligase from Burkholderia lata (strain ATCC 17760 / DSM 23089 / LMG 22485 / NCIMB 9086 / R18194 / 383).